The primary structure comprises 346 residues: Holliday junction branch migration complex subunit RuvB (346 aa).

Residues 1-188 form a large ATPase domain (RuvB-L) region; it reads MSDEYGPPER…FGIVQRLAYY (188 aa). ATP is bound by residues leucine 27, arginine 28, glycine 69, lysine 72, threonine 73, threonine 74, 135-137, arginine 178, tyrosine 188, and arginine 225; that span reads EDF. Threonine 73 provides a ligand contact to Mg(2+). The segment at 189 to 259 is small ATPAse domain (RuvB-S); it reads PVDELTRIVQ…VAADAMELLD (71 aa). The tract at residues 262-346 is head domain (RuvB-H); the sequence is RNGLDEQDRR…QAAGSGDLFG (85 aa). 3 residues coordinate DNA: arginine 298, arginine 317, and arginine 322.

The protein belongs to the RuvB family. In terms of assembly, homohexamer. Forms an RuvA(8)-RuvB(12)-Holliday junction (HJ) complex. HJ DNA is sandwiched between 2 RuvA tetramers; dsDNA enters through RuvA and exits via RuvB. An RuvB hexamer assembles on each DNA strand where it exits the tetramer. Each RuvB hexamer is contacted by two RuvA subunits (via domain III) on 2 adjacent RuvB subunits; this complex drives branch migration. In the full resolvosome a probable DNA-RuvA(4)-RuvB(12)-RuvC(2) complex forms which resolves the HJ.

The protein localises to the cytoplasm. It carries out the reaction ATP + H2O = ADP + phosphate + H(+). Functionally, the RuvA-RuvB-RuvC complex processes Holliday junction (HJ) DNA during genetic recombination and DNA repair, while the RuvA-RuvB complex plays an important role in the rescue of blocked DNA replication forks via replication fork reversal (RFR). RuvA specifically binds to HJ cruciform DNA, conferring on it an open structure. The RuvB hexamer acts as an ATP-dependent pump, pulling dsDNA into and through the RuvAB complex. RuvB forms 2 homohexamers on either side of HJ DNA bound by 1 or 2 RuvA tetramers; 4 subunits per hexamer contact DNA at a time. Coordinated motions by a converter formed by DNA-disengaged RuvB subunits stimulates ATP hydrolysis and nucleotide exchange. Immobilization of the converter enables RuvB to convert the ATP-contained energy into a lever motion, pulling 2 nucleotides of DNA out of the RuvA tetramer per ATP hydrolyzed, thus driving DNA branch migration. The RuvB motors rotate together with the DNA substrate, which together with the progressing nucleotide cycle form the mechanistic basis for DNA recombination by continuous HJ branch migration. Branch migration allows RuvC to scan DNA until it finds its consensus sequence, where it cleaves and resolves cruciform DNA. The chain is Holliday junction branch migration complex subunit RuvB from Halorhodospira halophila (strain DSM 244 / SL1) (Ectothiorhodospira halophila (strain DSM 244 / SL1)).